Reading from the N-terminus, the 654-residue chain is Chaperone protein HtpG (654 aa).

Positions 1-344 are a; substrate-binding; the sequence is MTVENAPQRE…SDDLPLNVSR (344 aa). The tract at residues 345 to 556 is b; the sequence is ELLQDSQVVR…EGGSPAYLER (212 aa). A c region spans residues 557 to 654; sequence LLQQRGRGAG…AQTPASATAS (98 aa).

It belongs to the heat shock protein 90 family. As to quaternary structure, homodimer.

Its subcellular location is the cytoplasm. In terms of biological role, molecular chaperone. Has ATPase activity. The sequence is that of Chaperone protein HtpG from Myxococcus xanthus (strain DK1622).